Reading from the N-terminus, the 811-residue chain is G-type lectin S-receptor-like serine/threonine-protein kinase LECRK2 (811 aa).

The first 23 residues, 1–23 (MAPLLFLPILQLLLLYCTKSAQA), serve as a signal peptide directing secretion. The Bulb-type lectin domain occupies 24–153 (QLNISIGSSL…DGATKWESFG (130 aa)). Over 24–464 (QLNISIGSSL…DKKYWILGSS (441 aa)) the chain is Extracellular. N-linked (GlcNAc...) asparagine glycans are attached at residues asparagine 26, asparagine 39, asparagine 59, asparagine 219, asparagine 226, asparagine 237, and asparagine 242. The 53-residue stretch at 292 to 344 (PENICQTIQTKVGSGACGFNSYCTFDGTKNTTNCLCPQRYKFFDNERTYKGCR) folds into the EGF-like; atypical domain. 5 disulfide bridges follow: cysteine 296–cysteine 314, cysteine 308–cysteine 325, cysteine 327–cysteine 343, cysteine 389–cysteine 411, and cysteine 393–cysteine 399. N-linked (GlcNAc...) asparagine glycosylation is present at asparagine 321. The PAN domain maps to 352-436 (CDLDETAAMV…LQATVLLKVP (85 aa)). Residues 465 to 485 (LFFGSSVLVNFLLIFVLLFGT) form a helical membrane-spanning segment. At 486 to 811 (YCSITSRKKT…DPSSYISSLA (326 aa)) the chain is on the cytoplasmic side. Residues 521-795 (GGFHEVLGTG…KVMQMLDGAV (275 aa)) enclose the Protein kinase domain. ATP contacts are provided by residues 527–535 (LGTGASGIV) and lysine 551. Aspartate 645 serves as the catalytic Proton acceptor.

This sequence belongs to the protein kinase superfamily. Ser/Thr protein kinase family.

It localises to the membrane. The enzyme catalyses L-seryl-[protein] + ATP = O-phospho-L-seryl-[protein] + ADP + H(+). The catalysed reaction is L-threonyl-[protein] + ATP = O-phospho-L-threonyl-[protein] + ADP + H(+). Involved in resistance against the herbivorous insect brown planthopper (N.lugens, BPH). Member of the BPH3 (BPH resistance locus 3) cluster which contains LECRK1, LECRK2 and LECRK3. This is G-type lectin S-receptor-like serine/threonine-protein kinase LECRK2 from Oryza sativa subsp. japonica (Rice).